Consider the following 394-residue polypeptide: Elongation factor Tu 2 (394 aa).

One can recognise a tr-type G domain in the interval lysine 10–glutamate 204. Residues glycine 19–threonine 26 are G1. Position 19–26 (glycine 19–threonine 26) interacts with GTP. Mg(2+) is bound at residue threonine 26. Residues glycine 60–asparagine 64 are G2. The tract at residues aspartate 81–glycine 84 is G3. GTP is bound by residues aspartate 81–histidine 85 and asparagine 136–aspartate 139. The G4 stretch occupies residues asparagine 136–aspartate 139. Positions serine 174–leucine 176 are G5.

It belongs to the TRAFAC class translation factor GTPase superfamily. Classic translation factor GTPase family. EF-Tu/EF-1A subfamily. In terms of assembly, monomer.

It is found in the cytoplasm. It catalyses the reaction GTP + H2O = GDP + phosphate + H(+). In terms of biological role, GTP hydrolase that promotes the GTP-dependent binding of aminoacyl-tRNA to the A-site of ribosomes during protein biosynthesis. This Serratia proteamaculans (strain 568) protein is Elongation factor Tu 2.